A 254-amino-acid chain; its full sequence is Ribonuclease HII (254 aa).

One can recognise an RNase H type-2 domain in the interval 67 to 254 (IVIAGVDEVG…HRMSFLKNII (188 aa)). Aspartate 73, glutamate 74, and aspartate 170 together coordinate a divalent metal cation.

Belongs to the RNase HII family. Mn(2+) serves as cofactor. It depends on Mg(2+) as a cofactor.

It localises to the cytoplasm. The catalysed reaction is Endonucleolytic cleavage to 5'-phosphomonoester.. In terms of biological role, endonuclease that specifically degrades the RNA of RNA-DNA hybrids. The polypeptide is Ribonuclease HII (Clostridium acetobutylicum (strain ATCC 824 / DSM 792 / JCM 1419 / IAM 19013 / LMG 5710 / NBRC 13948 / NRRL B-527 / VKM B-1787 / 2291 / W)).